We begin with the raw amino-acid sequence, 201 residues long: Xanthine phosphoribosyltransferase (201 aa).

Positions 20 and 27 each coordinate xanthine. 5-phospho-alpha-D-ribose 1-diphosphate is bound at residue 129–133 (ANGQA). K157 is a xanthine binding site.

The protein belongs to the purine/pyrimidine phosphoribosyltransferase family. Xpt subfamily. In terms of assembly, homodimer.

It localises to the cytoplasm. The enzyme catalyses XMP + diphosphate = xanthine + 5-phospho-alpha-D-ribose 1-diphosphate. The protein operates within purine metabolism; XMP biosynthesis via salvage pathway; XMP from xanthine: step 1/1. In terms of biological role, converts the preformed base xanthine, a product of nucleic acid breakdown, to xanthosine 5'-monophosphate (XMP), so it can be reused for RNA or DNA synthesis. This Shouchella clausii (strain KSM-K16) (Alkalihalobacillus clausii) protein is Xanthine phosphoribosyltransferase.